Here is a 412-residue protein sequence, read N- to C-terminus: Alanyl-tRNA editing protein Aarsd1 (412 aa).

Zn(2+) contacts are provided by His109 and His113. Ser174 carries the post-translational modification Phosphoserine. Zn(2+) contacts are provided by Cys209 and His213.

This sequence belongs to the class-II aminoacyl-tRNA synthetase family. Alax-L subfamily. Zn(2+) is required as a cofactor.

It localises to the cytoplasm. Its function is as follows. Functions in trans to edit the amino acid moiety from incorrectly charged tRNA(Ala). This chain is Alanyl-tRNA editing protein Aarsd1 (Aarsd1), found in Rattus norvegicus (Rat).